Reading from the N-terminus, the 359-residue chain is Probable dual-specificity RNA methyltransferase RlmN (359 aa).

Residue Glu91 is the Proton acceptor of the active site. In terms of domain architecture, Radical SAM core spans 97–329 (QHYGHSVCVT…KKNGVNCVVR (233 aa)). An intrachain disulfide couples Cys104 to Cys340. Cys111, Cys115, and Cys118 together coordinate [4Fe-4S] cluster. Residues 163–164 (GE), Ser195, 218–220 (SLH), and Asn296 contribute to the S-adenosyl-L-methionine site. Cys340 acts as the S-methylcysteine intermediate in catalysis.

The protein belongs to the radical SAM superfamily. RlmN family. Requires [4Fe-4S] cluster as cofactor.

It localises to the cytoplasm. It carries out the reaction adenosine(2503) in 23S rRNA + 2 reduced [2Fe-2S]-[ferredoxin] + 2 S-adenosyl-L-methionine = 2-methyladenosine(2503) in 23S rRNA + 5'-deoxyadenosine + L-methionine + 2 oxidized [2Fe-2S]-[ferredoxin] + S-adenosyl-L-homocysteine. It catalyses the reaction adenosine(37) in tRNA + 2 reduced [2Fe-2S]-[ferredoxin] + 2 S-adenosyl-L-methionine = 2-methyladenosine(37) in tRNA + 5'-deoxyadenosine + L-methionine + 2 oxidized [2Fe-2S]-[ferredoxin] + S-adenosyl-L-homocysteine. Its function is as follows. Specifically methylates position 2 of adenine 2503 in 23S rRNA and position 2 of adenine 37 in tRNAs. This is Probable dual-specificity RNA methyltransferase RlmN from Streptococcus pyogenes serotype M3 (strain ATCC BAA-595 / MGAS315).